The following is a 317-amino-acid chain: NAD-dependent protein deacetylase Sirt6 (317 aa).

Residues 27–273 (DEVVAEKCQE…SKVCKLLGVE (247 aa)) form the Deacetylase sirtuin-type domain. Residues A53, T57, F64, R65, W71, Q113, and H133 each coordinate NAD(+). The active-site Proton acceptor is H133. 4 residues coordinate Zn(2+): C141, C144, C166, and C177. Positions 215, 241, 243, and 259 each coordinate NAD(+).

It belongs to the sirtuin family. Class IV subfamily. The cofactor is Zn(2+). In terms of tissue distribution, widely expressed.

It is found in the nucleus. It localises to the chromosome. The catalysed reaction is N(6)-acetyl-L-lysyl-[protein] + NAD(+) + H2O = 2''-O-acetyl-ADP-D-ribose + nicotinamide + L-lysyl-[protein]. Its function is as follows. NAD-dependent histone deacylase that acts as a regulator of life span. The chain is NAD-dependent protein deacetylase Sirt6 from Drosophila melanogaster (Fruit fly).